The primary structure comprises 882 residues: Molybdenum cofactor sulfurase (882 aa).

K265 carries the post-translational modification N6-(pyridoxal phosphate)lysine. The active site involves C425. Residues 496–546 (GQPLPLATPGEAGAPPEDSEAQNAVPAARARGSSSPQEDTSPHSGVWNNSP) are disordered. Polar residues predominate over residues 527-546 (GSSSPQEDTSPHSGVWNNSP). A phosphoserine mark is found at S528 and S530. The MOSC domain maps to 707-868 (KQSSDFQRNA…LSVGSQVLPL (162 aa)).

It belongs to the class-V pyridoxal-phosphate-dependent aminotransferase family. MOCOS subfamily. The cofactor is pyridoxal 5'-phosphate. In terms of tissue distribution, ubiquitously expressed.

It carries out the reaction Mo-molybdopterin + L-cysteine + AH2 = thio-Mo-molybdopterin + L-alanine + A + H2O. It functions in the pathway cofactor biosynthesis; molybdopterin biosynthesis. Sulfurates the molybdenum cofactor. Sulfation of molybdenum is essential for xanthine dehydrogenase (XDH) and aldehyde oxidase (ADO) enzymes in which molybdenum cofactor is liganded by 1 oxygen and 1 sulfur atom in active form. This is Molybdenum cofactor sulfurase from Bos taurus (Bovine).